Here is a 515-residue protein sequence, read N- to C-terminus: Glucose-6-phosphate 1-dehydrogenase (515 aa).

Position 2 is an N-acetylalanine (Ala2). Residue Ser8 is modified to Phosphoserine. Position 10 is a phosphothreonine (Thr10). 38-45 (GASGDLAK) is an NADP(+) binding site. Lys89 carries the post-translational modification N6-acetyllysine. NADP(+) is bound by residues Tyr147 and Lys171. D-glucose 6-phosphate is bound by residues Lys171, 201–205 (HYLGK), Glu239, and Glu258. Lys171 bears the N6-(2-hydroxyisobutyryl)lysine; alternate mark. Lys171 carries the post-translational modification N6-acetyllysine; alternate. Residue Arg357 participates in NADP(+) binding. D-glucose 6-phosphate is bound by residues Lys360 and Arg365. NADP(+) is bound by residues Lys366, Arg370, and Arg393. A D-glucose 6-phosphate-binding site is contributed by Gln395. Residues 401 to 403 (YTK) and 421 to 423 (DLT) each bind NADP(+). N6-acetyllysine is present on Lys403. N6-acetyllysine is present on Lys432. Arg487 contacts NADP(+). Lys497 carries the N6-acetyllysine modification. Residues Tyr503 and Trp509 each contribute to the NADP(+) site. Tyr503 carries the post-translational modification Phosphotyrosine.

This sequence belongs to the glucose-6-phosphate dehydrogenase family. In terms of assembly, homotetramer; dimer of dimers. Interacts with SIRT2; the interaction is enhanced by H(2)O(2) treatment. Forms a ternary complex with ALDOB and TP53; this interaction is direct. ALDOB stabilizes the complex inhibiting G6PD activity and keeping oxidative pentose phosphate metabolism in check. Post-translationally, acetylated by ELP3 at Lys-403; acetylation inhibits its homodimerization and enzyme activity. Deacetylated by SIRT2 at Lys-403; deacetylation stimulates its enzyme activity.

The protein localises to the cytoplasm. Its subcellular location is the cytosol. The protein resides in the membrane. The enzyme catalyses D-glucose 6-phosphate + NADP(+) = 6-phospho-D-glucono-1,5-lactone + NADPH + H(+). Its pathway is carbohydrate degradation; pentose phosphate pathway; D-ribulose 5-phosphate from D-glucose 6-phosphate (oxidative stage): step 1/3. Functionally, cytosolic glucose-6-phosphate dehydrogenase that catalyzes the first and rate-limiting step of the oxidative branch within the pentose phosphate pathway/shunt, an alternative route to glycolysis for the dissimilation of carbohydrates and a major source of reducing power and metabolic intermediates for fatty acid and nucleic acid biosynthetic processes. This chain is Glucose-6-phosphate 1-dehydrogenase (G6PD), found in Bos indicus (Zebu).